We begin with the raw amino-acid sequence, 688 residues long: G protein-coupled receptor kinase 3 (688 aa).

The interval 1 to 190 (MADLEAVLAD…ELNIHLSMND (190 aa)) is N-terminal. The 122-residue stretch at 54–175 (TFDKIFNQKI…MESEKFTRFC (122 aa)) folds into the RGS domain. One can recognise a Protein kinase domain in the interval 191–453 (FSVHRIIGRG…ARELKEHIFF (263 aa)). ATP is bound by residues 197–205 (IGRGGFGEV) and lysine 220. The active-site Proton acceptor is aspartate 317. The 68-residue stretch at 454 to 521 (KGIDWQYVYL…MISERWQQEV (68 aa)) folds into the AGC-kinase C-terminal domain. The PH domain occupies 558-652 (DCIMHGYMLK…WLKELTCTFN (95 aa)).

This sequence belongs to the protein kinase superfamily. AGC Ser/Thr protein kinase family. GPRK subfamily. As to quaternary structure, interacts with GIT1. Post-translationally, ubiquitinated. In terms of tissue distribution, expressed in brain cortex, hippocampus, striatum, hypothalamus, cerebellum and brainstem (at protein level).

It localises to the postsynapse. It is found in the presynapse. The catalysed reaction is [beta-adrenergic receptor] + ATP = [beta-adrenergic receptor]-phosphate + ADP + H(+). In terms of biological role, specifically phosphorylates the agonist-occupied form of the beta-adrenergic and closely related receptors. The polypeptide is G protein-coupled receptor kinase 3 (Rattus norvegicus (Rat)).